The following is a 94-amino-acid chain: UPF0235 protein Dred_0717 (94 aa).

It belongs to the UPF0235 family.

The chain is UPF0235 protein Dred_0717 from Desulforamulus reducens (strain ATCC BAA-1160 / DSM 100696 / MI-1) (Desulfotomaculum reducens).